A 129-amino-acid polypeptide reads, in one-letter code: Succinate dehydrogenase assembly factor 3, mitochondrial (129 aa).

The N-terminal 21 residues, 1–21 (MQVNHLLRQAVKQTTRAGRLG), are a transit peptide targeting the mitochondrion.

It belongs to the complex I LYR family. SDHAF3 subfamily. In terms of assembly, interacts with the iron-sulfur protein subunit within the SDH catalytic dimer.

It localises to the mitochondrion matrix. Its function is as follows. Plays an essential role in the assembly of succinate dehydrogenase (SDH), an enzyme complex (also referred to as respiratory complex II) that is a component of both the tricarboxylic acid (TCA) cycle and the mitochondrial electron transport chain, and which couples the oxidation of succinate to fumarate with the reduction of ubiquinone (coenzyme Q) to ubiquinol. Promotes maturation of the iron-sulfur protein subunit of the SDH catalytic dimer, protecting it from the deleterious effects of oxidants. May act together with SDHAF1. The polypeptide is Succinate dehydrogenase assembly factor 3, mitochondrial (Kluyveromyces lactis (strain ATCC 8585 / CBS 2359 / DSM 70799 / NBRC 1267 / NRRL Y-1140 / WM37) (Yeast)).